The primary structure comprises 524 residues: Alanine aminotransferase 2 (524 aa).

Position 342 is an N6-(pyridoxal phosphate)lysine (Lys342).

The protein belongs to the class-I pyridoxal-phosphate-dependent aminotransferase family. Alanine aminotransferase subfamily. In terms of assembly, homodimer. It depends on pyridoxal 5'-phosphate as a cofactor.

It carries out the reaction L-alanine + 2-oxoglutarate = pyruvate + L-glutamate. The protein operates within amino-acid degradation; L-alanine degradation via transaminase pathway; pyruvate from L-alanine: step 1/1. Functionally, catalyzes the reversible transamination between alanine and 2-oxoglutarate to form pyruvate and glutamate. In Xenopus tropicalis (Western clawed frog), this protein is Alanine aminotransferase 2 (gpt2).